We begin with the raw amino-acid sequence, 260 residues long: 6-carboxyhexanoate--CoA ligase (260 aa).

Belongs to the BioW family. As to quaternary structure, homodimer. Mg(2+) is required as a cofactor.

It catalyses the reaction heptanedioate + ATP + CoA = 6-carboxyhexanoyl-CoA + AMP + diphosphate. The protein operates within metabolic intermediate metabolism; pimeloyl-CoA biosynthesis; pimeloyl-CoA from pimelate: step 1/1. Catalyzes the transformation of pimelate into pimeloyl-CoA with concomitant hydrolysis of ATP to AMP. In Fibrobacter succinogenes (strain ATCC 19169 / S85), this protein is 6-carboxyhexanoate--CoA ligase.